We begin with the raw amino-acid sequence, 389 residues long: Xylose isomerase (389 aa).

Residues H54 and D57 contribute to the active site. Mg(2+) contacts are provided by E181, E217, H220, D245, D255, D257, and D287.

This sequence belongs to the xylose isomerase family. In terms of assembly, homotetramer. Mg(2+) is required as a cofactor.

The protein localises to the cytoplasm. The enzyme catalyses alpha-D-xylose = alpha-D-xylulofuranose. Its function is as follows. Involved in D-xylose catabolism. The protein is Xylose isomerase (xylA) of Streptomyces violaceusniger.